Here is a 257-residue protein sequence, read N- to C-terminus: Neuroendocrine secretory protein 55 (257 aa).

The signal sequence occupies residues 1 to 46 (MDRRSRAQQWRRARHNYNDLCPPIGRRAATALLWLSCSIALLRALA). A disordered region spans residues 61 to 257 (SFLNAHHRSA…RKGPIPIRRH (197 aa)). The span at 70–82 (AAAAAAAQVLPES) shows a compositional bias: low complexity. Positions 86-103 (ESDHEHEEVEPELARPEC) are enriched in basic and acidic residues. The span at 104-139 (LEYDQDDYETETDSETEPESDIESETEIETEPETEP) shows a compositional bias: acidic residues. A compositionally biased stretch (basic and acidic residues) spans 200–211 (EPQRGPLDQDPR). Positions 227–237 (PRRCKTRRPAR) are enriched in basic residues.

This sequence belongs to the NESP55 family. In terms of processing, binds keratan sulfate chains. May be proteolytically processed to give rise to a number of active peptides.

The protein localises to the cytoplasmic vesicle. The protein resides in the secretory vesicle. It localises to the secreted. The sequence is that of Neuroendocrine secretory protein 55 from Mus musculus (Mouse).